The sequence spans 215 residues: Pyridoxine/pyridoxamine 5'-phosphate oxidase (215 aa).

Residues 9 to 12 and Lys-69 contribute to the substrate site; that span reads RRDY. Residues 64 to 69, 79 to 80, Lys-86, and Gln-108 contribute to the FMN site; these read RVLLLK and FT. Substrate contacts are provided by Tyr-126, Arg-130, and Ser-134. FMN contacts are provided by residues 143-144 and Trp-188; that span reads QS. Substrate is bound at residue 194–196; the sequence is RLH. Arg-198 provides a ligand contact to FMN.

This sequence belongs to the pyridoxamine 5'-phosphate oxidase family. As to quaternary structure, homodimer. The cofactor is FMN.

The catalysed reaction is pyridoxamine 5'-phosphate + O2 + H2O = pyridoxal 5'-phosphate + H2O2 + NH4(+). It carries out the reaction pyridoxine 5'-phosphate + O2 = pyridoxal 5'-phosphate + H2O2. It participates in cofactor metabolism; pyridoxal 5'-phosphate salvage; pyridoxal 5'-phosphate from pyridoxamine 5'-phosphate: step 1/1. It functions in the pathway cofactor metabolism; pyridoxal 5'-phosphate salvage; pyridoxal 5'-phosphate from pyridoxine 5'-phosphate: step 1/1. Its function is as follows. Catalyzes the oxidation of either pyridoxine 5'-phosphate (PNP) or pyridoxamine 5'-phosphate (PMP) into pyridoxal 5'-phosphate (PLP). This is Pyridoxine/pyridoxamine 5'-phosphate oxidase from Pseudomonas syringae pv. syringae (strain B728a).